The chain runs to 1278 residues: MTTHVTLEDALSNVDLLEELPLPDQQPCIEPPPSSIMYQANFDTNFEDRNAFVTGIARYIEQATVHSSMNEMLEEGHEYAVMLYTWRSCSRAIPQVKCNEQPNRVEIYEKTVEVLEPEVTKLMKFMYFQRKAIERFCSEVKRLCHAERRKDFVSEAYLLTLGKFINMFAVLDELKNMKCSVKNDHSAYKRAAQFLRKMADPQSIQESQNLSMFLANHNRITQCLHQQLEVIPGYEELLADIVNICVDYYENKMYLTPSEKHMLLKVMGFGLYLMDGNVSNIYKLDAKKRINLSKIDKFFKQLQVVPLFGDMQIELARYIKTSAHYEENKSKWTCTQSSISPQYNICEQMVQIRDDHIRFISELARYSNSEVVTGSGLDSQKSDEEYRELFDLALRGLQLLSKWSAHVMEVYSWKLVHPTDKFCNKDCPGTAEEYERATRYNYTSEEKFAFVEVIAMIKGLQVLMGRMESVFNQAIRNTIYAALQDFAQVTLREPLRQAVRKKKNVLISVLQAIRKTICDWEGGREPPNDPCLRGEKDPKGGFDIKVPRRAVGPSSTQACQWSPRALFHPTGGTQGRRGCRSLLYMVRTMLESLIADKSGSKKTLRSSLDGPIVLAIEDFHKQSFFFTHLLNISEALQQCCDLSQLWFREFFLELTMGRRIQFPIEMSMPWILTDHILETKEPSMMEYVLYPLDLYNDSAYYALTKFKKQFLYDEIEAEVNLCFDQFVYKLADQIFAYYKAMAGSVLLDKRFRAECKNYGVIIPYPPSNRYETLLKQRHVQLLGRSIDLNRLITQRISAAMYKSLDQAISRFESEDLTSIVELEWLLEINRLTHRLLCKHMTLDSFDAMFREANHNVSAPYGRITLHVFWELNFDFLPNYCYNGSTNRFVRTAIPFTQEPQRDKPANVQPYYLYGSKPLNIAYSHIYSSYRNFVGPPHFKTICRLLGYQGIAVVMEELLKIVKSLLQGTILQYVKTLIEVMPKICRLPRHEYGSPGILEFFHHQLKDIIEYAELKTDVFQSLREVGNAILFCLLIEQALSQEEVCDLLHAAPFQNILPRVYIKEGERLEVRMKRLEAKYAPLHLVPLIERLGTPQQIAIAREGDLLTKERLCCGLSMFEVILTRIRSYLQDPIWRGPPPTNGVMHVDECVEFHRLWSAMQFVYCIPVGTNEFTAEQCFGDGLNWAGCSIIVLLGQQRRFDLFDFCYHLLKVQRQDGKDEIIKNVPLKKMADRIRKYQILNNEVFAILNKYMKSVETDSSTVEHVRCFQPPIHQSLATTC.

The residue at position 1062 (Lys-1062) is an N6-acetyllysine.

The protein belongs to the CYFIP family. As to quaternary structure, component of the WAVE1 complex composed of ABI2, CYFIP2, BRK1, NCKAP1 and WASF1/WAVE1. Interacts with FMR1, FXR1 and FXR2. Interacts with FMR1 isoform 6; the interaction occurs in a RNA-dependent manner. Interacts with RAC1 (activated form) which causes the complex to dissociate, releasing activated WASF1. The complex can also be activated by NCK1. Interacts with SHANK3; the interaction mediates the association of SHANK3 with the WAVE1 complex. Interacts with TMEM108 (via N-terminus); the interaction associates TMEM108 with the WAVE1 complex. Expressed in T-cells. Increased expression is observed in CD4(+) T-lymphocytes from patients with multiple sclerosis (at protein level).

Its subcellular location is the cytoplasm. It is found in the nucleus. The protein localises to the perinuclear region. It localises to the synapse. The protein resides in the synaptosome. Involved in T-cell adhesion and p53/TP53-dependent induction of apoptosis. Does not bind RNA. As component of the WAVE1 complex, required for BDNF-NTRK2 endocytic trafficking and signaling from early endosomes. The chain is Cytoplasmic FMR1-interacting protein 2 from Homo sapiens (Human).